A 692-amino-acid polypeptide reads, in one-letter code: Elongation factor G (692 aa).

One can recognise a tr-type G domain in the interval E8–T283. GTP contacts are provided by residues A17–T24, D81–H85, and N135–D138.

The protein belongs to the TRAFAC class translation factor GTPase superfamily. Classic translation factor GTPase family. EF-G/EF-2 subfamily.

It localises to the cytoplasm. Functionally, catalyzes the GTP-dependent ribosomal translocation step during translation elongation. During this step, the ribosome changes from the pre-translocational (PRE) to the post-translocational (POST) state as the newly formed A-site-bound peptidyl-tRNA and P-site-bound deacylated tRNA move to the P and E sites, respectively. Catalyzes the coordinated movement of the two tRNA molecules, the mRNA and conformational changes in the ribosome. The sequence is that of Elongation factor G from Nitratiruptor sp. (strain SB155-2).